The primary structure comprises 56 residues: Large ribosomal subunit protein bL32 (56 aa).

Positions 1-26 (MAVQQNKKSRSKRGMRRSHDALSTAQ) are disordered. The segment covering 7–16 (KKSRSKRGMR) has biased composition (basic residues).

Belongs to the bacterial ribosomal protein bL32 family.

In Shewanella amazonensis (strain ATCC BAA-1098 / SB2B), this protein is Large ribosomal subunit protein bL32.